Here is a 259-residue protein sequence, read N- to C-terminus: Ribonuclease PH (259 aa).

Residues Arg-88 and 126–128 contribute to the phosphate site; that span reads GTR.

The protein belongs to the RNase PH family. In terms of assembly, homohexameric ring arranged as a trimer of dimers.

It catalyses the reaction tRNA(n+1) + phosphate = tRNA(n) + a ribonucleoside 5'-diphosphate. In terms of biological role, phosphorolytic 3'-5' exoribonuclease that plays an important role in tRNA 3'-end maturation. Removes nucleotide residues following the 3'-CCA terminus of tRNAs; can also add nucleotides to the ends of RNA molecules by using nucleoside diphosphates as substrates, but this may not be physiologically important. Probably plays a role in initiation of 16S rRNA degradation (leading to ribosome degradation) during starvation. The protein is Ribonuclease PH of Mycobacterium avium (strain 104).